The following is an 87-amino-acid chain: Large ribosomal subunit protein bL27 (87 aa).

The protein belongs to the bacterial ribosomal protein bL27 family.

The chain is Large ribosomal subunit protein bL27 from Phocaeicola vulgatus (strain ATCC 8482 / DSM 1447 / JCM 5826 / CCUG 4940 / NBRC 14291 / NCTC 11154) (Bacteroides vulgatus).